Consider the following 37-residue polypeptide: Photosystem I reaction center subunit IX (37 aa).

A helical transmembrane segment spans residues Phe4–Ile24.

This sequence belongs to the PsaJ family.

The protein resides in the cellular thylakoid membrane. May help in the organization of the PsaE and PsaF subunits. The chain is Photosystem I reaction center subunit IX from Picosynechococcus sp. (strain ATCC 27264 / PCC 7002 / PR-6) (Agmenellum quadruplicatum).